The following is a 150-amino-acid chain: Large ribosomal subunit protein bL9 (150 aa).

It belongs to the bacterial ribosomal protein bL9 family.

In terms of biological role, binds to the 23S rRNA. The protein is Large ribosomal subunit protein bL9 of Moorella thermoacetica (strain ATCC 39073 / JCM 9320).